The chain runs to 956 residues: Matrilin-2 (956 aa).

The first 23 residues, 1–23, serve as a signal peptide directing secretion; it reads MEKMLVGCLLMLGQLFLVLPVDG. The region spanning 57–232 is the VWFA 1 domain; the sequence is DLVFIIDSSR…SQIESLTSVF (176 aa). N-linked (GlcNAc...) asparagine glycosylation occurs at N221. EGF-like domains follow at residues 238–278, 279–319, 320–360, 361–401, 402–442, 443–483, 484–524, 525–565, 566–606, and 607–647; these read TVHM…KTCR, IQDL…KRCT, AVDY…KTCS, KIDY…KTCR, RINY…KTCS, RVDH…KTCS, RADY…KTCA, KLDS…KTCR, RKDV…KRCR, and RKNV…KHCK. 30 disulfide bridges follow: C242/C253, C249/C262, C264/C277, C283/C294, C290/C303, C305/C318, C324/C335, C331/C344, C346/C359, C365/C376, C372/C385, C387/C400, C406/C417, C413/C426, C428/C441, C447/C458, C454/C467, C469/C482, C488/C499, C495/C508, C510/C523, C529/C540, C536/C549, C551/C564, C570/C581, C577/C590, C592/C605, C611/C622, C618/C631, and C633/C646. Residues 655–830 enclose the VWFA 2 domain; it reads DLVFVIDGSK…STMGEISEKL (176 aa). N-linked (GlcNAc...) asparagine glycosylation occurs at N890. A coiled-coil region spans residues 917-955; it reads KCENLILFQNVANEEVRKLTQRLEEMTQRMEALENRLKY.

In terms of tissue distribution, detected in a variety of organs, including calvaria, uterus, heart and brain, as well as fibroblast and osteoblast cell lines.

The protein localises to the secreted. In terms of biological role, involved in matrix assembly. The sequence is that of Matrilin-2 (Matn2) from Mus musculus (Mouse).